Reading from the N-terminus, the 239-residue chain is ATP-dependent dethiobiotin synthetase BioD (239 aa).

Residue 15-20 (EIGKTF) coordinates ATP. Residue Thr-19 participates in Mg(2+) binding. Lys-40 is an active-site residue. Residues Asp-57, 118–121 (EGVG), and 178–179 (NH) each bind ATP. Mg(2+) contacts are provided by Asp-57 and Glu-118.

It belongs to the dethiobiotin synthetase family. Homodimer. Mg(2+) is required as a cofactor.

The protein localises to the cytoplasm. It carries out the reaction (7R,8S)-7,8-diammoniononanoate + CO2 + ATP = (4R,5S)-dethiobiotin + ADP + phosphate + 3 H(+). It functions in the pathway cofactor biosynthesis; biotin biosynthesis; biotin from 7,8-diaminononanoate: step 1/2. Catalyzes a mechanistically unusual reaction, the ATP-dependent insertion of CO2 between the N7 and N8 nitrogen atoms of 7,8-diaminopelargonic acid (DAPA, also called 7,8-diammoniononanoate) to form a ureido ring. The chain is ATP-dependent dethiobiotin synthetase BioD from Burkholderia cenocepacia (strain HI2424).